The primary structure comprises 425 residues: Serine--tRNA ligase (425 aa).

230–232 (TAE) provides a ligand contact to L-serine. 261-263 (RAE) is an ATP binding site. L-serine is bound at residue E284. 348–351 (EISS) contributes to the ATP binding site. S384 contributes to the L-serine binding site.

This sequence belongs to the class-II aminoacyl-tRNA synthetase family. Type-1 seryl-tRNA synthetase subfamily. Homodimer. The tRNA molecule binds across the dimer.

It localises to the cytoplasm. The catalysed reaction is tRNA(Ser) + L-serine + ATP = L-seryl-tRNA(Ser) + AMP + diphosphate + H(+). It catalyses the reaction tRNA(Sec) + L-serine + ATP = L-seryl-tRNA(Sec) + AMP + diphosphate + H(+). Its pathway is aminoacyl-tRNA biosynthesis; selenocysteinyl-tRNA(Sec) biosynthesis; L-seryl-tRNA(Sec) from L-serine and tRNA(Sec): step 1/1. In terms of biological role, catalyzes the attachment of serine to tRNA(Ser). Is also able to aminoacylate tRNA(Sec) with serine, to form the misacylated tRNA L-seryl-tRNA(Sec), which will be further converted into selenocysteinyl-tRNA(Sec). This is Serine--tRNA ligase from Zymomonas mobilis subsp. mobilis (strain ATCC 31821 / ZM4 / CP4).